Reading from the N-terminus, the 440-residue chain is GTPase Der (440 aa).

2 EngA-type G domains span residues 4–169 and 178–353; these read PVVA…PEED and IKVA…DQAA. GTP-binding positions include 10–17, 57–61, 120–123, 184–191, 231–235, and 296–299; these read GRPNVGKS, DTGGI, NKVD, GKPNVGKS, DTAGI, and NKWD. Positions 354–438 constitute a KH-like domain; the sequence is MRISTGVLND…PIKFILREKE (85 aa).

It belongs to the TRAFAC class TrmE-Era-EngA-EngB-Septin-like GTPase superfamily. EngA (Der) GTPase family. In terms of assembly, associates with the 50S ribosomal subunit.

Functionally, GTPase that plays an essential role in the late steps of ribosome biogenesis. The protein is GTPase Der of Acetivibrio thermocellus (strain ATCC 27405 / DSM 1237 / JCM 9322 / NBRC 103400 / NCIMB 10682 / NRRL B-4536 / VPI 7372) (Clostridium thermocellum).